The following is a 72-amino-acid chain: Translation initiation factor IF-1 (72 aa).

The S1-like domain occupies 1–72 (MAKEEMLEFP…TKGRINYRFK (72 aa)).

It belongs to the IF-1 family. Component of the 30S ribosomal translation pre-initiation complex which assembles on the 30S ribosome in the order IF-2 and IF-3, IF-1 and N-formylmethionyl-tRNA(fMet); mRNA recruitment can occur at any time during PIC assembly.

The protein localises to the cytoplasm. One of the essential components for the initiation of protein synthesis. Stabilizes the binding of IF-2 and IF-3 on the 30S subunit to which N-formylmethionyl-tRNA(fMet) subsequently binds. Helps modulate mRNA selection, yielding the 30S pre-initiation complex (PIC). Upon addition of the 50S ribosomal subunit IF-1, IF-2 and IF-3 are released leaving the mature 70S translation initiation complex. The polypeptide is Translation initiation factor IF-1 (Jannaschia sp. (strain CCS1)).